We begin with the raw amino-acid sequence, 602 residues long: Arginine--tRNA ligase (602 aa).

The short motif at 124–134 is the 'HIGH' region element; the sequence is ANPTGPVHVGR.

The protein belongs to the class-I aminoacyl-tRNA synthetase family.

The protein resides in the cytoplasm. It carries out the reaction tRNA(Arg) + L-arginine + ATP = L-arginyl-tRNA(Arg) + AMP + diphosphate. In Halorubrum lacusprofundi (strain ATCC 49239 / DSM 5036 / JCM 8891 / ACAM 34), this protein is Arginine--tRNA ligase.